Here is a 2227-residue protein sequence, read N- to C-terminus: Genome polyprotein (2227 aa).

Short sequence motifs ((L)YPX(n)L motif) lie at residues 167–171 (YPHGL) and 200–205 (YPVWEL). The interval 766–836 (MMSRIAAGDL…PRKMKGLFSQ (71 aa)) is involved in P1-2A pentamerization. The chain crosses the membrane as a helical span at residues 1011–1031 (TVEIINTVLCFVKSGILLYVI). Residues 1043-1070 (IGLLRVMNYADIGCSVISCGKVFSKMLE) form a membrane-penetrating ability region. Residues 1127–1152 (KKKDILNILKDNQQKIEKAIEEADNF) are a coiled coil. One can recognise an SF3 helicase domain in the interval 1204–1366 (HQKLKNLGSI…SFFKNPHNDM (163 aa)). ATP is bound at residue 1230–1237 (GKRGGGKS). Residues 1462 to 1482 (WVAVGAAVGILGVLVGGWFVY) form a helical membrane-spanning segment. Residue Y1499 is modified to O-(5'-phospho-RNA)-tyrosine. One can recognise a Peptidase C3 domain in the interval 1514 to 1728 (DPVESQSTLE…VAKLVTQEMF (215 aa)). Residues H1563, D1603, and C1691 each act as for protease 3C activity in the active site. One can recognise a RdRp catalytic domain in the interval 1976 to 2097 (DVGLDLDFSA…VFSRDVQIDN (122 aa)).

The protein belongs to the picornaviridae polyprotein family. Homodimer. Homomultimer; probably interacts with membranes in a multimeric form. Seems to assemble into amyloid-like fibers. As to quaternary structure, homodimer. Monomer. Interacts with protein 3CD. In terms of assembly, interacts with host ACBD3. Interacts with protein 3AB. As to quaternary structure, interacts with human MAVS. In terms of assembly, homodimer; disulfide-linked. Homopentamer. Homooligomer. As to quaternary structure, interacts with capsid protein VP2. Interacts with capsid protein VP3. In terms of assembly, interacts with capsid protein VP1. Interacts with capsid protein VP3. Interacts with capsid protein VP1. Interacts with capsid protein VP2. Specific enzymatic cleavages by viral protease in vivo yield a variety of precursors and mature proteins. Polyprotein processing intermediates are produced, such as P1-2A which is a functional precursor of the structural proteins, VP0 which is a VP4-VP2 precursor, VP1-2A precursor, 3ABC precursor which is a stable and catalytically active precursor of 3A, 3B and 3C proteins, 3AB and 3CD precursors. The assembly signal 2A is removed from VP1-2A by a host protease, possibly host Cathepsin L. This cleavage occurs over a region of 3 amino-acids probably generating VP1 proteins with heterogeneous C-termini. Post-translationally, during virion maturation, immature virions are rendered infectious following cleavage of VP0 into VP4 and VP2. This maturation seems to be an autocatalytic event triggered by the presence of RNA in the capsid and is followed by a conformational change of the particle. In terms of processing, the assembly signal 2A is removed from VP1-2A by a host protease, possibly host Cathepsin L in naked virions. This cleavage does not occur in enveloped virions. This cleavage occurs over a region of 3 amino-acids probably generating VP1 proteins with heterogeneous C-termini. VPg is uridylylated prior to priming replication into VPg-pUpU. Post-translationally, unlike other picornaviruses, does not seem to be myristoylated.

The protein resides in the virion. It localises to the host endosome. Its subcellular location is the host multivesicular body. It is found in the host membrane. The protein localises to the host mitochondrion outer membrane. The protein resides in the host cytoplasm. It localises to the host cytoplasmic vesicle membrane. The catalysed reaction is RNA(n) + a ribonucleoside 5'-triphosphate = RNA(n+1) + diphosphate. The enzyme catalyses a ribonucleoside 5'-triphosphate + H2O = a ribonucleoside 5'-diphosphate + phosphate + H(+). It catalyses the reaction Selective cleavage of Gln-|-Gly bond in the poliovirus polyprotein. In other picornavirus reactions Glu may be substituted for Gln, and Ser or Thr for Gly.. Functionally, capsid proteins VP1, VP2, and VP3 form a closed capsid enclosing the viral positive strand RNA genome. All these proteins contain a beta-sheet structure called beta-barrel jelly roll. Together they form an icosahedral capsid (T=3) composed of 60 copies of each VP1, VP2, and VP3, with a diameter of approximately 300 Angstroms. VP1 is situated at the 12 fivefold axes, whereas VP2 and VP3 are located at the quasi-sixfold axes. The naked capsid interacts with the host receptor HAVCR1 to provide virion attachment to and probably entry into the target cell. VP0 precursor is a component of the immature procapsids. Its function is as follows. Plays a role in the assembly of the 12 pentamers into an icosahedral structure. Has not been detected in mature virions, supposedly owing to its small size. In terms of biological role, precursor component of immature procapsids that corresponds to an extended form of the structural protein VP1. After maturation, possibly by the host Cathepsin L, the assembly signal 2A is cleaved to give rise to the mature VP1 protein. Functionally, functions as a viroporin. Affects membrane integrity and causes an increase in membrane permeability. Involved in host intracellular membrane rearrangements probably to give rise to the viral factories. Does not disrupt calcium homeostasis or glycoprotein trafficking. Antagonizes the innate immune response of the host by suppressing IFN-beta synthesis, which it achieves by interfering with the RIG-I/IFIH1 pathway. Affects membrane integrity and causes an increase in membrane permeability. Its function is as follows. Associates with and induces structural rearrangements of intracellular membranes. Displays RNA-binding activity. In terms of biological role, the precursor 3ABC is targeted to the mitochondrial membrane where protease 3C activity cleaves and inhibits the host antiviral protein MAVS, thereby disrupting activation of IRF3 through the IFIH1/MDA5 pathway. In vivo, the protease activity of 3ABC precursor is more efficient in cleaving the 2BC precursor than that of protein 3C. The 3ABC precursor may therefore play a role in the proteolytic processing of the polyprotein. Possible viroporin. Functionally, interacts with the 3CD precursor and with RNA structures found at both the 5'- and 3'-termini of the viral genome. Since the 3AB precursor contains the hydrophobic domain 3A, it probably anchors the whole viral replicase complex to intracellular membranes on which viral RNA synthesis occurs. May serve as membrane anchor to the 3AB and 3ABC precursors via its hydrophobic domain. May interact with RNA. Its function is as follows. Acts as a primer for viral RNA replication and remains covalently bound to viral genomic RNA. VPg is uridylylated prior to priming replication into VPg-pUpU. The VPg-pUpU is then used as primer on the genomic RNA poly(A) by the RNA-dependent RNA polymerase to replicate the viral genome. In terms of biological role, cysteine protease that generates mature viral proteins from the precursor polyprotein. In addition to its proteolytic activity, it binds to viral RNA, and thus influences viral genome replication. RNA and substrate bind cooperatively to the protease. Cleaves IKBKG/NEMO to impair innate immune signaling. Cleaves host PABPC1 which may participate in the switch of viral translation to RNA synthesis. Functionally, interacts with the 3AB precursor and with RNA structures found at both the 5'- and 3'-termini of the viral genome. Disrupts TLR3 signaling by degrading the host adapter protein TICAM1/TRIF. RNA-directed RNA polymerase 3D-POL replicates genomic and antigenomic RNA by recognizing replications specific signals. The polypeptide is Genome polyprotein (Cercopithecus hamlyni (Owl-faced monkey)).